Here is a 746-residue protein sequence, read N- to C-terminus: Ring assembly protein 3 (746 aa).

It is found in the cytoplasm. Functionally, essential for actinomyosin ring assembly during cytokinesis. Has a role, in conjunction with F-actin, in assembling myosin II-containing proteins, such as myo2, at the division site. This Schizosaccharomyces pombe (strain 972 / ATCC 24843) (Fission yeast) protein is Ring assembly protein 3 (rng3).